Here is an 827-residue protein sequence, read N- to C-terminus: MVSAQLHFLCLLTLYLTGAYGQEGKFSGPLKPMTFSIFEGQEPSQIIFQFKANPPAVTFELTGETDGIFKIEKDGLLYHTRVLDRETRAVHHLQLAALDSQGAIVDGPVPIIIEVKDINDNRPTFLQTKYEGSVRQNSRPGKPFMYVNATDLDDPATPNGQLFYQIVIQLPKINNVMYFQIDNKTGAISLTPEGSQVLDPIKNPYYNLVVSVKDMGGQNENSFSDTTSVDITVRENIWKAPEPVEIRENLTDPHPIKITQVQWNDPGAHYSLINKEKLPQFPFSIDQEGNIYVTQPLDREEKDSHVFFATAKDENGKPLAYPLEIRVKVIDINDNPPTCLSQVTVFEVQENEVLGSSIGIFAAHDMDEANNINSILKYRLVDQTPKVPSDELFLIDEYGGKVQLGKRSLKKQDSPQYNLTVEVSDIDFKTLCSLQVNVIDINDQIPIFERSDYGSKTLSEDTAIGSTILIIQATDDDEPFTGSSKILYKIVQGDTEGRLEVVTDPMTNTGYVKIRKPLDFETEPVTSIVFKAENPEPLVNGIEYNASSFASFELTVTDVNEVPVFPQQIFQANVSEDTAIGTKVGTVTARDPEGLTVSYSLKDNKRGWLKIDSVTGDIFSTAPLDRETESVYRVQVVATEVGGSSLSSTAYFHLVLMDVNDNPPRLAKDYTGLFFCHPLSAPGSLIFEATDDDQQSVRRPKFTFALGRESLQSDWEVSKINGTHARLSTKHTRFEEQVYDIPILINDGGQPPMEGIVSLSVTFCQCVDGSCFRPAGNQVGIPTVGMAVGILLTTFLVIGIILAVVFIRMRKDKVEDPQSPENKPLRS.

Residues 1–21 (MVSAQLHFLCLLTLYLTGAYG) form the signal peptide. Topologically, residues 22-786 (QEGKFSGPLK…NQVGIPTVGM (765 aa)) are extracellular. Cadherin domains lie at 29 to 127 (PLKP…TFLQ), 128 to 243 (TKYE…APEP), 244 to 339 (VEIR…PPTC), 340 to 448 (LSQV…IPIF), 449 to 565 (ERSD…VPVF), 566 to 666 (PQQI…PPRL), and 667 to 776 (AKDY…RPAG). Residues Asn148, Asn183, Asn249, Asn418, Asn545, Asn573, and Asn721 are each glycosylated (N-linked (GlcNAc...) asparagine). The helical transmembrane segment at 787 to 807 (AVGILLTTFLVIGIILAVVFI) threads the bilayer. The Cytoplasmic portion of the chain corresponds to 808–827 (RMRKDKVEDPQSPENKPLRS).

Liver and intestine.

The protein resides in the cell membrane. Functionally, cadherins are calcium-dependent cell adhesion proteins. They preferentially interact with themselves in a homophilic manner in connecting cells; cadherins may thus contribute to the sorting of heterogeneous cell types. LI-cadherin may have a role in the morphological organization of liver and intestine. The chain is Cadherin-17 (Cdh17) from Rattus norvegicus (Rat).